A 127-amino-acid chain; its full sequence is MYIIMGVFTTIVNIASFYILVEIMNVDYKAATVAAWILSVLFAYITNKLYVFQQKTHDLQSLLKELTAFFSVRVLSLGIDLGMMIILVGQFNTNETLAKILDNAVIVVVNYVASKWLVFKKTKEEGV.

Helical transmembrane passes span 1–21 (MYII…YILV), 32–52 (TVAA…LYVF), 68–88 (AFFS…IILV), and 100–120 (ILDN…LVFK).

This sequence belongs to the GtrA family.

It is found in the cell membrane. This is an uncharacterized protein from Bacillus subtilis (strain 168).